Reading from the N-terminus, the 245-residue chain is MTLTASSSSRAVTNSPVVVALDYHNRDAAMAFVDKIDPRDCRLKVGKEMFTLFGPQFVSELQQRGFDIFLDLKFHDIPNTAAHAVAAAADLGVWMVNVHASGGARMMAAAREALVPFGKDAPLLIAVTVLTSMEASDLADLGVTLSPADYAERLAALTQKCGLDGVVCSAQEAVRFKQVFGQEFKLVTPGIRPQGSDAGDQRRIMTPEQALAAGVDYMVIGRPVTQSVDPAQTLKAINASLQRSA.

Substrate is bound by residues Asp-22, Lys-44, Asp-71–Thr-80, Thr-131, Arg-192, Gln-201, Gly-221, and Arg-222. The Proton donor role is filled by Lys-73.

This sequence belongs to the OMP decarboxylase family. Type 1 subfamily. As to quaternary structure, homodimer.

The enzyme catalyses orotidine 5'-phosphate + H(+) = UMP + CO2. It participates in pyrimidine metabolism; UMP biosynthesis via de novo pathway; UMP from orotate: step 2/2. Catalyzes the decarboxylation of orotidine 5'-monophosphate (OMP) to uridine 5'-monophosphate (UMP). This chain is Orotidine 5'-phosphate decarboxylase, found in Escherichia coli O6:K15:H31 (strain 536 / UPEC).